Here is a 232-residue protein sequence, read N- to C-terminus: Thrombin-like enzyme bothrombin (232 aa).

Positions 1-223 (VIGGDECDIN…YLPWIQSIIA (223 aa)) constitute a Peptidase S1 domain. 6 cysteine pairs are disulfide-bonded: C7–C139, C26–C42, C74–C230, C118–C184, C150–C163, and C174–C199. Residues H41 and D86 each act as charge relay system in the active site. N-linked (GlcNAc...) asparagine glycans are attached at residues N98 and N146. The active-site Charge relay system is S178. Residue N225 is glycosylated (N-linked (GlcNAc...) asparagine).

The protein belongs to the peptidase S1 family. Snake venom subfamily. Monomer. Expressed by the venom gland.

Its subcellular location is the secreted. The enzyme catalyses Selective cleavage of Arg-|-Xaa bond in fibrinogen, to form fibrin, and release fibrinopeptide A. The specificity of further degradation of fibrinogen varies with species origin of the enzyme.. With respect to regulation, inhibited by diisopropylfluorophosphate (DFP), but not by hirudin. Functionally, thrombin-like snake venom serine protease that clots fibrinogen by releasing fibrinopeptide A from the alpha chain of fibrinogen (FGA), induces platelet aggregation through its interaction with GPIb (GP1BA/GP1BB), and activates factor VIII (F8). In Bothrops jararaca (Jararaca), this protein is Thrombin-like enzyme bothrombin.